The following is a 302-amino-acid chain: Oxygen-dependent coproporphyrinogen-III oxidase (302 aa).

Residue S94 participates in substrate binding. Positions 98 and 108 each coordinate a divalent metal cation. The Proton donor role is filled by H108. Substrate is bound at residue 110–112 (NVR). A divalent metal cation is bound by residues H147 and H177. The tract at residues 242 to 277 (YVEFNLVYDRGTLFGLQTGGRTESILMSMPPLVRWQ) is important for dimerization. Residue 260 to 262 (GGR) coordinates substrate.

This sequence belongs to the aerobic coproporphyrinogen-III oxidase family. As to quaternary structure, homodimer. It depends on a divalent metal cation as a cofactor.

The protein localises to the cytoplasm. It catalyses the reaction coproporphyrinogen III + O2 + 2 H(+) = protoporphyrinogen IX + 2 CO2 + 2 H2O. Its pathway is porphyrin-containing compound metabolism; protoporphyrin-IX biosynthesis; protoporphyrinogen-IX from coproporphyrinogen-III (O2 route): step 1/1. Functionally, involved in the heme biosynthesis. Catalyzes the aerobic oxidative decarboxylation of propionate groups of rings A and B of coproporphyrinogen-III to yield the vinyl groups in protoporphyrinogen-IX. This Shewanella sp. (strain MR-4) protein is Oxygen-dependent coproporphyrinogen-III oxidase.